Here is a 699-residue protein sequence, read N- to C-terminus: Elongation factor G (699 aa).

The 282-residue stretch at 8–289 (ERYRNIGISA…AVVEYMPAPT (282 aa)) folds into the tr-type G domain. GTP contacts are provided by residues 17 to 24 (AHIDAGKT), 88 to 92 (DTPGH), and 142 to 145 (NKMD).

This sequence belongs to the TRAFAC class translation factor GTPase superfamily. Classic translation factor GTPase family. EF-G/EF-2 subfamily.

The protein localises to the cytoplasm. Its function is as follows. Catalyzes the GTP-dependent ribosomal translocation step during translation elongation. During this step, the ribosome changes from the pre-translocational (PRE) to the post-translocational (POST) state as the newly formed A-site-bound peptidyl-tRNA and P-site-bound deacylated tRNA move to the P and E sites, respectively. Catalyzes the coordinated movement of the two tRNA molecules, the mRNA and conformational changes in the ribosome. The sequence is that of Elongation factor G from Variovorax paradoxus (strain S110).